The sequence spans 697 residues: Elongation factor G (697 aa).

A tr-type G domain is found at 8 to 283 (ERMRNIGIAA…AVVDYLPSPL (276 aa)). GTP-binding positions include 17 to 24 (AHIDAGKT), 81 to 85 (DTPGH), and 135 to 138 (NKMD).

It belongs to the TRAFAC class translation factor GTPase superfamily. Classic translation factor GTPase family. EF-G/EF-2 subfamily.

The protein resides in the cytoplasm. In terms of biological role, catalyzes the GTP-dependent ribosomal translocation step during translation elongation. During this step, the ribosome changes from the pre-translocational (PRE) to the post-translocational (POST) state as the newly formed A-site-bound peptidyl-tRNA and P-site-bound deacylated tRNA move to the P and E sites, respectively. Catalyzes the coordinated movement of the two tRNA molecules, the mRNA and conformational changes in the ribosome. This Solibacter usitatus (strain Ellin6076) protein is Elongation factor G.